We begin with the raw amino-acid sequence, 168 residues long: Putative postmeiotic segregation increased 2-like protein 3 (168 aa).

Residues 8–84 (VSFKDVAVDF…EGEFPCQHSP (77 aa)) enclose the KRAB domain.

This sequence belongs to the DNA mismatch repair MutL/HexB family.

This chain is Putative postmeiotic segregation increased 2-like protein 3 (PMS2P3), found in Homo sapiens (Human).